A 399-amino-acid polypeptide reads, in one-letter code: S-adenosylmethionine synthase (399 aa).

His-15 contributes to the ATP binding site. Asp-17 lines the Mg(2+) pocket. Residue Glu-43 coordinates K(+). Glu-56 and Gln-99 together coordinate L-methionine. The flexible loop stretch occupies residues 99 to 109 (QSADIAQGVDN). Residues 174–176 (DGK), 244–245 (RF), Asp-253, 259–260 (RK), Ala-276, and Lys-280 each bind ATP. Asp-253 contacts L-methionine. Residue Lys-284 participates in L-methionine binding.

This sequence belongs to the AdoMet synthase family. Homotetramer; dimer of dimers. Mg(2+) is required as a cofactor. It depends on K(+) as a cofactor.

The protein localises to the cytoplasm. It carries out the reaction L-methionine + ATP + H2O = S-adenosyl-L-methionine + phosphate + diphosphate. It participates in amino-acid biosynthesis; S-adenosyl-L-methionine biosynthesis; S-adenosyl-L-methionine from L-methionine: step 1/1. Catalyzes the formation of S-adenosylmethionine (AdoMet) from methionine and ATP. The overall synthetic reaction is composed of two sequential steps, AdoMet formation and the subsequent tripolyphosphate hydrolysis which occurs prior to release of AdoMet from the enzyme. The sequence is that of S-adenosylmethionine synthase from Salinispora tropica (strain ATCC BAA-916 / DSM 44818 / JCM 13857 / NBRC 105044 / CNB-440).